The chain runs to 311 residues: Alpha/beta hydrolase domain-containing protein 17C (311 aa).

Positions 48 to 67 (EAPASTAQQPPREEGSGEPA) are disordered. Residues serine 193, aspartate 258, and histidine 287 each act as charge relay system in the active site.

It belongs to the AB hydrolase superfamily. ABHD17 family. In terms of processing, palmitoylated on cysteine residues located in a cysteine cluster at the N-terminus which promotes membrane localization.

It localises to the recycling endosome membrane. It is found in the cell projection. Its subcellular location is the dendritic spine. The protein localises to the postsynaptic density membrane. It carries out the reaction S-hexadecanoyl-L-cysteinyl-[protein] + H2O = L-cysteinyl-[protein] + hexadecanoate + H(+). In terms of biological role, hydrolyzes fatty acids from S-acylated cysteine residues in proteins. Has depalmitoylating activity towards NRAS. This is Alpha/beta hydrolase domain-containing protein 17C from Xenopus laevis (African clawed frog).